Here is a 149-residue protein sequence, read N- to C-terminus: MSELKKMKIRLLKLHPNAVIPAYQSAGAAGFDLCCVESLEIPPLGRALVSTGLALALEEGYELQIRPRSGLALKHGITVLNTPGTVDSDYRGEIKVILINLGAESFSIQAGDRIAQGVVSRLSIAELCEVESLDETARGAGGFGSTGKS.

Substrate is bound by residues 68–70 (RSG), Asn81, 85–87 (TVD), and Lys95.

It belongs to the dUTPase family. Requires Mg(2+) as cofactor.

The enzyme catalyses dUTP + H2O = dUMP + diphosphate + H(+). Its pathway is pyrimidine metabolism; dUMP biosynthesis; dUMP from dCTP (dUTP route): step 2/2. Its function is as follows. This enzyme is involved in nucleotide metabolism: it produces dUMP, the immediate precursor of thymidine nucleotides and it decreases the intracellular concentration of dUTP so that uracil cannot be incorporated into DNA. The polypeptide is Deoxyuridine 5'-triphosphate nucleotidohydrolase (Wolinella succinogenes (strain ATCC 29543 / DSM 1740 / CCUG 13145 / JCM 31913 / LMG 7466 / NCTC 11488 / FDC 602W) (Vibrio succinogenes)).